A 312-amino-acid polypeptide reads, in one-letter code: Type II methyltransferase M.NgoMIV (312 aa).

The region spanning 3–311 is the SAM-dependent MTase C5-type domain; sequence FTSLEICAGA…RQIIKALKKE (309 aa). Cys-74 is an active-site residue.

This sequence belongs to the class I-like SAM-binding methyltransferase superfamily. C5-methyltransferase family.

It carries out the reaction a 2'-deoxycytidine in DNA + S-adenosyl-L-methionine = a 5-methyl-2'-deoxycytidine in DNA + S-adenosyl-L-homocysteine + H(+). A methylase, recognizes the double-stranded sequence 5'-GCCGGC-3', methylates C-2 on both strands, and protects the DNA from cleavage by the NgoMIV endonuclease. This Neisseria gonorrhoeae protein is Type II methyltransferase M.NgoMIV (ngoMIVM).